The sequence spans 408 residues: Acetate kinase (408 aa).

Asn-7 lines the Mg(2+) pocket. An ATP-binding site is contributed by Lys-14. Arg-98 lines the substrate pocket. Asp-155 functions as the Proton donor/acceptor in the catalytic mechanism. Residues 214 to 218 (HLGNG), 289 to 291 (DLR), and 337 to 341 (GVGEN) contribute to the ATP site. Residue Glu-390 coordinates Mg(2+).

It belongs to the acetokinase family. In terms of assembly, homodimer. Mg(2+) is required as a cofactor. Requires Mn(2+) as cofactor.

The protein resides in the cytoplasm. The enzyme catalyses acetate + ATP = acetyl phosphate + ADP. Its pathway is metabolic intermediate biosynthesis; acetyl-CoA biosynthesis; acetyl-CoA from acetate: step 1/2. Functionally, catalyzes the formation of acetyl phosphate from acetate and ATP. Can also catalyze the reverse reaction. In Cyanothece sp. (strain PCC 7425 / ATCC 29141), this protein is Acetate kinase.